Here is a 254-residue protein sequence, read N- to C-terminus: Guanylate kinase (254 aa).

The region spanning Lys-64–Met-243 is the Guanylate kinase-like domain. Gly-71–Gly-78 is a binding site for ATP.

Belongs to the guanylate kinase family.

It is found in the cytoplasm. It carries out the reaction GMP + ATP = GDP + ADP. In terms of biological role, essential for recycling GMP and indirectly, cGMP. In Leifsonia xyli subsp. xyli (strain CTCB07), this protein is Guanylate kinase.